The primary structure comprises 121 residues: Putative membrane protein insertion efficiency factor (121 aa).

A disordered region spans residues 97-121 (VPARRDRHAGGRRCCPANVDEQRST).

The protein belongs to the UPF0161 family.

The protein resides in the cell membrane. Functionally, could be involved in insertion of integral membrane proteins into the membrane. In Rhodococcus jostii (strain RHA1), this protein is Putative membrane protein insertion efficiency factor.